A 483-amino-acid chain; its full sequence is Glutamyl-tRNA(Gln) amidotransferase subunit A (483 aa).

Residues Lys75 and Ser150 each act as charge relay system in the active site. Catalysis depends on Ser174, which acts as the Acyl-ester intermediate.

It belongs to the amidase family. GatA subfamily. In terms of assembly, heterotrimer of A, B and C subunits.

The catalysed reaction is L-glutamyl-tRNA(Gln) + L-glutamine + ATP + H2O = L-glutaminyl-tRNA(Gln) + L-glutamate + ADP + phosphate + H(+). Allows the formation of correctly charged Gln-tRNA(Gln) through the transamidation of misacylated Glu-tRNA(Gln) in organisms which lack glutaminyl-tRNA synthetase. The reaction takes place in the presence of glutamine and ATP through an activated gamma-phospho-Glu-tRNA(Gln). In Microcystis aeruginosa (strain NIES-843 / IAM M-2473), this protein is Glutamyl-tRNA(Gln) amidotransferase subunit A.